A 494-amino-acid polypeptide reads, in one-letter code: MIELLSIALKHSNIILNSIFIGAFILNLLFAFTIIFMERRSANSIWAWLLVLVFLPLFGFILYLLLGRQIQRDQIFKIDKEDKKGLELIVDEQLAALKNENFSNSNYQIVKFKEMIQMLLYNNAAFLTTDNDLKIYTDGQEKFDDLIQDIRNATDYIHFQYYIIQNDELGRTILNELGKKAEQGVEVKILYDDMGSRGLRKKGLRPFRNKGGHAEAFFPSKLPLINLRMNNRNHRKIVVIDGQIGYVGGFNVGDEYLGKSKKFGYWRDTHLRIVGDAVNALQLRFILDWNSQATRDHISYDDRYFPDVNSGGTIGVQIASSGPDEEWEQIKYGYLKMISSAKKSIYIQSPYFIPDQAFLDSIKIAALGGVDVNIMIPNKPDHPFVFWATLKNAASLLDAGVKVFHYDNGFLHSKTLVIDDEIASVGTANMDHRSFTLNFEVNAFIYDQQIAKKLKQAFIDDLAVSSELTKARYAKRSLWIKFKEGISQLLSPIL.

2 helical membrane passes run 14 to 34 (IILN…AFTI) and 45 to 65 (IWAW…LYLL). PLD phosphodiesterase domains lie at 229 to 256 (MNNR…GDEY) and 407 to 434 (DNGF…DHRS). Residues histidine 234, lysine 236, aspartate 241, histidine 412, lysine 414, and aspartate 419 contribute to the active site.

It belongs to the phospholipase D family. Cardiolipin synthase subfamily.

It is found in the cell membrane. The catalysed reaction is 2 a 1,2-diacyl-sn-glycero-3-phospho-(1'-sn-glycerol) = a cardiolipin + glycerol. In terms of biological role, catalyzes the reversible phosphatidyl group transfer from one phosphatidylglycerol molecule to another to form cardiolipin (CL) (diphosphatidylglycerol) and glycerol. The chain is Cardiolipin synthase (cls) from Staphylococcus aureus (strain Mu50 / ATCC 700699).